Here is a 303-residue protein sequence, read N- to C-terminus: 2-dehydropantoate 2-reductase (303 aa).

NADP(+) contacts are provided by residues 7–12 (GCGALG), Asn-98, and Ala-122. Residue Asn-98 coordinates substrate. The active-site Proton donor is Lys-176. Substrate is bound by residues Asn-180, Asn-184, Asn-194, and Ser-244. NADP(+) is bound at residue Glu-256.

The protein belongs to the ketopantoate reductase family.

The protein resides in the cytoplasm. The catalysed reaction is (R)-pantoate + NADP(+) = 2-dehydropantoate + NADPH + H(+). The protein operates within cofactor biosynthesis; (R)-pantothenate biosynthesis; (R)-pantoate from 3-methyl-2-oxobutanoate: step 2/2. Its function is as follows. Catalyzes the NADPH-dependent reduction of ketopantoate into pantoic acid. This is 2-dehydropantoate 2-reductase (panE) from Yersinia pestis.